The primary structure comprises 318 residues: tRNA U34 carboxymethyltransferase (318 aa).

Residues Lys85, Trp99, Lys104, Gly124, 175 to 176 (LD), Met190, Tyr194, and Arg311 contribute to the carboxy-S-adenosyl-L-methionine site.

This sequence belongs to the class I-like SAM-binding methyltransferase superfamily. CmoB family. As to quaternary structure, homotetramer.

It carries out the reaction carboxy-S-adenosyl-L-methionine + 5-hydroxyuridine(34) in tRNA = 5-carboxymethoxyuridine(34) in tRNA + S-adenosyl-L-homocysteine + H(+). Its function is as follows. Catalyzes carboxymethyl transfer from carboxy-S-adenosyl-L-methionine (Cx-SAM) to 5-hydroxyuridine (ho5U) to form 5-carboxymethoxyuridine (cmo5U) at position 34 in tRNAs. The chain is tRNA U34 carboxymethyltransferase from Ruthia magnifica subsp. Calyptogena magnifica.